We begin with the raw amino-acid sequence, 265 residues long: MSGSTIIPWVVGNWKMNPKQSDAIQLVQQFKDLLKQQPISEQYCHVGVAPIAIALTTIQSELATANRQVATVAQDVSRFAGTGAYTGEISAELLTDSQIRYVLIGHSERRDLLGDHVEILKAKLSHALNAGMTVIYCVGESLEQREQGLAEQIVLQQICDIAPVVSAEQWQHQIVIAYEPIWAIGTGRTASPEDAQAIHAKIREGLCQITPAGSQIALLYGGSVKPENAVELAACPDINGALVGGASLNAESFYKIAQAFAQTQQ.

Position 13–15 (13–15 (NWK)) interacts with substrate. His106 serves as the catalytic Electrophile. Glu179 (proton acceptor) is an active-site residue. Substrate contacts are provided by residues Gly185, Ser223, and 244–245 (GG).

This sequence belongs to the triosephosphate isomerase family. In terms of assembly, homodimer.

The protein localises to the cytoplasm. It carries out the reaction D-glyceraldehyde 3-phosphate = dihydroxyacetone phosphate. Its pathway is carbohydrate biosynthesis; gluconeogenesis. It participates in carbohydrate degradation; glycolysis; D-glyceraldehyde 3-phosphate from glycerone phosphate: step 1/1. Involved in the gluconeogenesis. Catalyzes stereospecifically the conversion of dihydroxyacetone phosphate (DHAP) to D-glyceraldehyde-3-phosphate (G3P). This Acinetobacter baylyi (strain ATCC 33305 / BD413 / ADP1) protein is Triosephosphate isomerase.